Here is a 139-residue protein sequence, read N- to C-terminus: Large ribosomal subunit protein uL16 (139 aa).

Residues 1–20 (MLIPKRTKYRKQHRPVRRGM) show a composition bias toward basic residues. The segment at 1 to 21 (MLIPKRTKYRKQHRPVRRGMS) is disordered.

This sequence belongs to the universal ribosomal protein uL16 family. As to quaternary structure, part of the 50S ribosomal subunit.

Binds 23S rRNA and is also seen to make contacts with the A and possibly P site tRNAs. The sequence is that of Large ribosomal subunit protein uL16 from Bifidobacterium adolescentis (strain ATCC 15703 / DSM 20083 / NCTC 11814 / E194a).